The chain runs to 379 residues: Putative zinc metalloprotease sll0528 (379 aa).

A run of 2 helical transmembrane segments spans residues L20–L40 and G54–A74. H75 serves as a coordination point for Zn(2+). The active site involves E76. H79 is a binding site for Zn(2+). The next 3 helical transmembrane spans lie at F115–V135, I148–L168, and G212–L232. 2 consecutive CBS domains span residues V257–Q315 and M322–A379.

Belongs to the peptidase M50B family. The cofactor is Zn(2+).

Its subcellular location is the cell membrane. In Synechocystis sp. (strain ATCC 27184 / PCC 6803 / Kazusa), this protein is Putative zinc metalloprotease sll0528.